Reading from the N-terminus, the 268-residue chain is Eukaryotic translation initiation factor 3 subunit G-2 (268 aa).

Residues 187-265 enclose the RRM domain; it reads SAVRISNLSE…LILCVEWSKP (79 aa).

The protein belongs to the eIF-3 subunit G family. In terms of assembly, component of the eukaryotic translation initiation factor 3 (eIF-3) complex. The eIF-3 complex interacts with pix.

The protein resides in the cytoplasm. Functionally, RNA-binding component of the eukaryotic translation initiation factor 3 (eIF-3) complex, which is involved in protein synthesis of a specialized repertoire of mRNAs and, together with other initiation factors, stimulates binding of mRNA and methionyl-tRNAi to the 40S ribosome. The eIF-3 complex specifically targets and initiates translation of a subset of mRNAs involved in cell proliferation. This subunit can bind 18S rRNA. This chain is Eukaryotic translation initiation factor 3 subunit G-2, found in Drosophila willistoni (Fruit fly).